The sequence spans 183 residues: dTDP-4-dehydrorhamnose 3,5-epimerase (183 aa).

Substrate-binding positions include arginine 24, glutamate 29, 48-50 (QDN), and arginine 60. Histidine 63 acts as the Proton acceptor in catalysis. Substrate contacts are provided by lysine 73 and histidine 120. Tyrosine 133 serves as the catalytic Proton donor. Substrate contacts are provided by glutamate 144 and lysine 169.

This sequence belongs to the dTDP-4-dehydrorhamnose 3,5-epimerase family. Homodimer.

The enzyme catalyses dTDP-4-dehydro-6-deoxy-alpha-D-glucose = dTDP-4-dehydro-beta-L-rhamnose. It participates in carbohydrate biosynthesis; dTDP-L-rhamnose biosynthesis. Its pathway is bacterial outer membrane biogenesis; LPS O-antigen biosynthesis. Catalyzes the epimerization of the C3' and C5'positions of dTDP-6-deoxy-D-xylo-4-hexulose, forming dTDP-6-deoxy-L-lyxo-4-hexulose. The sequence is that of dTDP-4-dehydrorhamnose 3,5-epimerase from Salmonella typhimurium (strain LT2 / SGSC1412 / ATCC 700720).